Here is a 226-residue protein sequence, read N- to C-terminus: Ribonuclease 3 (226 aa).

Residues 6 to 128 (INRLQRKLGY…LIGGIFLDSD (123 aa)) enclose the RNase III domain. E41 lines the Mg(2+) pocket. The active site involves D45. Mg(2+) contacts are provided by D114 and E117. E117 is an active-site residue. The DRBM domain maps to 155-225 (DPKTRLQEYL…AEQALKQLEL (71 aa)).

It belongs to the ribonuclease III family. Homodimer. The cofactor is Mg(2+).

The protein localises to the cytoplasm. It catalyses the reaction Endonucleolytic cleavage to 5'-phosphomonoester.. Its function is as follows. Digests double-stranded RNA. Involved in the processing of primary rRNA transcript to yield the immediate precursors to the large and small rRNAs (23S and 16S). Processes some mRNAs, and tRNAs when they are encoded in the rRNA operon. Processes pre-crRNA and tracrRNA of type II CRISPR loci if present in the organism. This chain is Ribonuclease 3, found in Yersinia enterocolitica serotype O:8 / biotype 1B (strain NCTC 13174 / 8081).